Here is a 503-residue protein sequence, read N- to C-terminus: Maturase K (503 aa).

This sequence belongs to the intron maturase 2 family. MatK subfamily.

It localises to the plastid. Its subcellular location is the chloroplast. In terms of biological role, usually encoded in the trnK tRNA gene intron. Probably assists in splicing its own and other chloroplast group II introns. The protein is Maturase K of Vicia faba (Broad bean).